The following is a 364-amino-acid chain: Anthranilate phosphoribosyltransferase (364 aa).

5-phospho-alpha-D-ribose 1-diphosphate is bound by residues G101, 104-105, T109, 111-114, 129-137, and G141; these read GD, NLST, and KHGNRAASS. G101 contributes to the anthranilate binding site. S113 is a binding site for Mg(2+). N132 serves as a coordination point for anthranilate. R187 provides a ligand contact to anthranilate. Residues D245 and E246 each coordinate Mg(2+).

It belongs to the anthranilate phosphoribosyltransferase family. As to quaternary structure, homodimer. Mg(2+) serves as cofactor.

The enzyme catalyses N-(5-phospho-beta-D-ribosyl)anthranilate + diphosphate = 5-phospho-alpha-D-ribose 1-diphosphate + anthranilate. It participates in amino-acid biosynthesis; L-tryptophan biosynthesis; L-tryptophan from chorismate: step 2/5. Catalyzes the transfer of the phosphoribosyl group of 5-phosphorylribose-1-pyrophosphate (PRPP) to anthranilate to yield N-(5'-phosphoribosyl)-anthranilate (PRA). The polypeptide is Anthranilate phosphoribosyltransferase (Mycolicibacterium gilvum (strain PYR-GCK) (Mycobacterium gilvum (strain PYR-GCK))).